Consider the following 285-residue polypeptide: Ubiquinone biosynthesis protein COQ4, mitochondrial (285 aa).

A mitochondrion-targeting transit peptide spans 1-11; sequence MPPTVRQGIRT. 4 residues coordinate Zn(2+): histidine 166, aspartate 167, histidine 170, and glutamate 182.

It belongs to the COQ4 family. As to quaternary structure, component of a multi-subunit COQ enzyme complex, composed of at least COQ3, COQ4, COQ5, COQ6, COQ7 and COQ9. The cofactor is Zn(2+).

It localises to the mitochondrion inner membrane. It catalyses the reaction a 4-hydroxy-3-methoxy-5-(all-trans-polyprenyl)benzoate + H(+) = a 2-methoxy-6-(all-trans-polyprenyl)phenol + CO2. The protein operates within cofactor biosynthesis; ubiquinone biosynthesis. In terms of biological role, lyase that catalyzes the C1-decarboxylation of 4-hydroxy-3-methoxy-5-(all-trans-polyprenyl)benzoic acid into 2-methoxy-6-(all-trans-polyprenyl)phenol during ubiquinone biosynthesis. The polypeptide is Ubiquinone biosynthesis protein COQ4, mitochondrial (Paracoccidioides brasiliensis (strain Pb18)).